The primary structure comprises 317 residues: Xylose/arabinose import permease protein XacH (317 aa).

6 helical membrane passes run 40 to 60 (GIPFVLMSIAVYGGTGYNFAI), 98 to 118 (LVLLVGFTTICLVLGLFLAIL), 132 to 152 (VYLLPMSLSFVVTAQLWLWMF), 179 to 199 (IALGAVILALIWQFSGYTMVV), 241 to 261 (AAVVLMVFALKAFTFLYALVG), and 290 to 310 (AAIATMLLIMALGVIGPYLYY). In terms of domain architecture, ABC transmembrane type-1 spans 94-309 (AQNNLVLLVG…ALGVIGPYLY (216 aa)).

This sequence belongs to the binding-protein-dependent transport system permease family. The complex is composed of two ATP-binding proteins (XacJ and XacK), two transmembrane proteins (XacH and XacI) and a solute-binding protein (XacG).

It localises to the cell membrane. Part of the ABC transporter complex XacGHIJK involved in the uptake of xylose and arabinose. Responsible for the translocation of the substrate across the membrane. The protein is Xylose/arabinose import permease protein XacH of Haloferax volcanii (strain ATCC 29605 / DSM 3757 / JCM 8879 / NBRC 14742 / NCIMB 2012 / VKM B-1768 / DS2) (Halobacterium volcanii).